Consider the following 499-residue polypeptide: Probable alkaline/neutral invertase F (499 aa).

S11 is subject to Phosphoserine. At T20 the chain carries Phosphothreonine. S497 is subject to Phosphoserine.

The protein belongs to the glycosyl hydrolase 100 family.

It carries out the reaction Hydrolysis of terminal non-reducing beta-D-fructofuranoside residues in beta-D-fructofuranosides.. In terms of biological role, invertase that cleaves sucrose into glucose and fructose. This is Probable alkaline/neutral invertase F from Arabidopsis thaliana (Mouse-ear cress).